The sequence spans 207 residues: Protein GrpE (207 aa).

A disordered region spans residues 1–31 (MSEHQTPPEEDLTVANGDSAEAVSEPDVTVA).

This sequence belongs to the GrpE family. As to quaternary structure, homodimer.

It is found in the cytoplasm. Participates actively in the response to hyperosmotic and heat shock by preventing the aggregation of stress-denatured proteins, in association with DnaK and GrpE. It is the nucleotide exchange factor for DnaK and may function as a thermosensor. Unfolded proteins bind initially to DnaJ; upon interaction with the DnaJ-bound protein, DnaK hydrolyzes its bound ATP, resulting in the formation of a stable complex. GrpE releases ADP from DnaK; ATP binding to DnaK triggers the release of the substrate protein, thus completing the reaction cycle. Several rounds of ATP-dependent interactions between DnaJ, DnaK and GrpE are required for fully efficient folding. The protein is Protein GrpE of Synechococcus elongatus (strain ATCC 33912 / PCC 7942 / FACHB-805) (Anacystis nidulans R2).